The chain runs to 263 residues: MSSYHLSTKERLLAIVDDIEIISKELIENTIAPKHQKMSSADHGQLVELLVSKDKELKATLQLAAEQAGIEKKMDGLREQVKEQDEEINQLQKQLKEAEHILATSIFQGRQKLSSINKAVKRPVSSEELIKFAHRISASNAICAPLTWQQGDLRRPYPTDIEMRLGFLGKSDLNINGHNAPNQNNLNEMQRNAAGAGAGSGVADIPASAQNQFAWHPSGELHMTMGAGAGSVSLDTRSHKDASQDDVEVMSTDSSSSSSSDSQ.

The stretch at 62–106 forms a coiled coil; that stretch reads QLAAEQAGIEKKMDGLREQVKEQDEEINQLQKQLKEAEHILATSI. Residues 221–263 form a disordered region; sequence LHMTMGAGAGSVSLDTRSHKDASQDDVEVMSTDSSSSSSSDSQ. A compositionally biased stretch (low complexity) spans 251–263; sequence STDSSSSSSSDSQ.

It belongs to the Mediator complex subunit 4 family. In terms of assembly, component of the Mediator complex.

The protein localises to the nucleus. In terms of biological role, component of the Mediator complex, a coactivator involved in the regulated transcription of nearly all RNA polymerase II-dependent genes. Mediator functions as a bridge to convey information from gene-specific regulatory proteins to the basal RNA polymerase II transcription machinery. Mediator is recruited to promoters by direct interactions with regulatory proteins and serves as a scaffold for the assembly of a functional preinitiation complex with RNA polymerase II and the general transcription factors. This chain is Mediator of RNA polymerase II transcription subunit 4 (MED4), found in Aedes aegypti (Yellowfever mosquito).